Here is a 481-residue protein sequence, read N- to C-terminus: MAYNDTDRNQTEKLLKRVRELEQEVQRLKKEQAKNKEDSNIRENSAGAGKTKRAFDFSAHGRRHVALRIAYMGWGYQGFASQENTNNTIEEKLFEALTKTRLVESRQTSNYHRCGRTDKGVSAFGQVISLDLRSQFPRGRDSEDFNVKEEANAAAEEIRYTHILNRVLPPDIRILAWAPVEPSFSARFSCLERTYRYFFPRADLDIVTMDYAAQKYVGTHDFRNLCKMDVANGVINFQRTILSAQVQLVGQSPGEGRWQEPFQLCQFEVTGQAFLYHQVRCMMAILFLIGQGMEKPEIIDELLNIEKNPQKPQYSMAVEFPLVLYDCKFENVKWIYDQEAQEFNITHLQQLWANHAVKTHMLYSMLQGLDTVPVPCGIGPKMDGMTEWGNVKPSVIKQTSAFVEGVKMRTYKPLMDRPKCQGLESRIQHFVRRGRIEHPHLFHEEETKAKRDCNDTLEEENTNLETPTKRVCVDTEIKSII.

Ala2 carries the N-acetylalanine modification. A compositionally biased stretch (basic and acidic residues) spans 29-41 (KKEQAKNKEDSNI). Residues 29–50 (KKEQAKNKEDSNIRENSAGAGK) form a disordered region. Asp118 acts as the Nucleophile in catalysis. Tyr195 provides a ligand contact to substrate. Phosphothreonine is present on residues Thr456, Thr466, and Thr468.

This sequence belongs to the tRNA pseudouridine synthase TruA family.

Its subcellular location is the nucleus. The catalysed reaction is uridine(38/39) in tRNA = pseudouridine(38/39) in tRNA. Formation of pseudouridine at position 39 in the anticodon stem and loop of transfer RNAs. The polypeptide is tRNA pseudouridine(38/39) synthase (PUS3) (Homo sapiens (Human)).